The primary structure comprises 602 residues: Elongation factor 4 (602 aa).

One can recognise a tr-type G domain in the interval 7–188; it reads ENIRNFSIIA…SIIRLVPPPK (182 aa). GTP is bound by residues 19–24 and 135–138; these read DHGKST and NKID.

The protein belongs to the TRAFAC class translation factor GTPase superfamily. Classic translation factor GTPase family. LepA subfamily.

The protein localises to the cell inner membrane. It catalyses the reaction GTP + H2O = GDP + phosphate + H(+). Its function is as follows. Required for accurate and efficient protein synthesis under certain stress conditions. May act as a fidelity factor of the translation reaction, by catalyzing a one-codon backward translocation of tRNAs on improperly translocated ribosomes. Back-translocation proceeds from a post-translocation (POST) complex to a pre-translocation (PRE) complex, thus giving elongation factor G a second chance to translocate the tRNAs correctly. Binds to ribosomes in a GTP-dependent manner. This chain is Elongation factor 4, found in Chlamydia trachomatis serovar L2 (strain ATCC VR-902B / DSM 19102 / 434/Bu).